The primary structure comprises 301 residues: MRHLLDFQGWTRPEVESLLDTARVMREVLERPVKKVPALQGFTVATVFFEPSTRTRISFELAARRMSADVVSFAAQTSSLQKGESYKDTLLTLEAMGVDAYVIRADSAGVPHQATRWVKGAVINGGDGRRAHPTQALLDAYTLLEALGTLEGKKVAIVGDILHSRVARSNAELLPLLGAQVFCAGPPSLLPQSLPGAHLTPRLEEALEEADAVMVLRLQKERMEAGLVHLEDYIARYQVTEKRLALAKPQAPLLHPGPMNRDVELEGTLADSARSLVNRQVQNGVAVRMAVLYHLLVGKGR.

Residues Arg-54 and Thr-55 each coordinate carbamoyl phosphate. Lys-82 serves as a coordination point for L-aspartate. 3 residues coordinate carbamoyl phosphate: Arg-104, His-132, and Gln-135. L-aspartate is bound by residues Arg-165 and Arg-217. Gly-257 and Pro-258 together coordinate carbamoyl phosphate.

The protein belongs to the aspartate/ornithine carbamoyltransferase superfamily. ATCase family. In terms of assembly, heterododecamer (2C3:3R2) of six catalytic PyrB chains organized as two trimers (C3), and six regulatory PyrI chains organized as three dimers (R2).

It carries out the reaction carbamoyl phosphate + L-aspartate = N-carbamoyl-L-aspartate + phosphate + H(+). Its pathway is pyrimidine metabolism; UMP biosynthesis via de novo pathway; (S)-dihydroorotate from bicarbonate: step 2/3. Catalyzes the condensation of carbamoyl phosphate and aspartate to form carbamoyl aspartate and inorganic phosphate, the committed step in the de novo pyrimidine nucleotide biosynthesis pathway. In Thermus aquaticus, this protein is Aspartate carbamoyltransferase catalytic subunit.